The following is a 490-amino-acid chain: MPAVQLLLLAGLVWGAGARTAQLRKANDRSGRCQYTFSVASPSESSCPEQGQTMSAIQDLQRDSSTQRADLESTKARLSSLESLLHRLTLAQTSGPQEIQEELQKELGTLRRERDQLESQTRELEAAYSNLLRDKSALEEEKRRLMQENEDLARRLESSSQEVARLARGQCPQARDTSQDVPAGSREASQWNLDTLAFQELKSELTEVPASRILKENPPVLPRGEEGDNGCGELVWVGQPVTLRTAETITGKYGVWMRDPKPTSPHTQETTWRIDTVGTDIRQVFEYDRISQFVQGYPSKVYVLPRSLESTGAVVYAGSLYFQGAGSRTVIRFELNTETVKAEKEIPGAGYRGQFPYSWGGYTDIDLAVDETGLWVIYSTEEARGAIVLSKLNPENLELEKTWETNIRKQSVANAFIICGTLYTVSSYSSADATVNFAYDTGTGISKPLAIPFKNRYKYSSMIDYNPLERKLFAWDSFNMVTYDIKLSKI.

The N-terminal stretch at 1-18 is a signal peptide; it reads MPAVQLLLLAGLVWGAGA. A coiled-coil region spans residues 55-170; it reads SAIQDLQRDS…QEVARLARGQ (116 aa). The interval 168–187 is disordered; sequence RGQCPQARDTSQDVPAGSRE. The 260-residue stretch at 230 to 489 folds into the Olfactomedin-like domain; that stretch reads GCGELVWVGQ…MVTYDIKLSK (260 aa). Cysteines 231 and 419 form a disulfide. Asp366, Asn414, Ala415, Ile463, and Asp464 together coordinate Ca(2+). The short motif at 488–490 is the Microbody targeting signal element; it reads SKI.

As to quaternary structure, homodimer (via N-terminus). Can also form higher oligomers. Interacts with OLFM3, FN1, NRCAM, GLDN and NFASC. Interacts (via N-terminus) with MYL2. Interacts with SFRP1, FRZB, FZD7, FZD10, FZD1 and WIF1; regulates Wnt signaling. Interacts with SNTA1; regulates muscle hypertrophy. Interacts with ERBB2 and ERBB3; activates ERBB2-ERBB3 signaling pathway. Interacts with SNCG; affects its secretion and its aggregation. In terms of processing, palmitoylated. Glycosylated. Post-translationally, undergoes a calcium-dependent proteolytic cleavage at Arg-212 by CAPN2 in the endoplasmic reticulum. The result is the production of two fragments, one of 35 kDa containing the C-terminal olfactomedin-like domain, and another of 20 kDa containing the N-terminal leucine zipper-like domain. In terms of tissue distribution, detected in eye aqueous humor (at protein level).

Its subcellular location is the secreted. The protein resides in the golgi apparatus. It localises to the cytoplasmic vesicle. The protein localises to the extracellular space. It is found in the extracellular matrix. Its subcellular location is the extracellular exosome. The protein resides in the mitochondrion. It localises to the mitochondrion intermembrane space. The protein localises to the mitochondrion inner membrane. It is found in the mitochondrion outer membrane. Its subcellular location is the rough endoplasmic reticulum. The protein resides in the cell projection. It localises to the cilium. The protein localises to the endoplasmic reticulum. Its function is as follows. Secreted glycoprotein regulating the activation of different signaling pathways in adjacent cells to control different processes including cell adhesion, cell-matrix adhesion, cytoskeleton organization and cell migration. Promotes substrate adhesion, spreading and formation of focal contacts. Negatively regulates cell-matrix adhesion and stress fiber assembly through Rho protein signal transduction. Modulates the organization of actin cytoskeleton by stimulating the formation of stress fibers through interactions with components of Wnt signaling pathways. Promotes cell migration through activation of PTK2 and the downstream phosphatidylinositol 3-kinase signaling. Plays a role in bone formation and promotes osteoblast differentiation in a dose-dependent manner through mitogen-activated protein kinase signaling. Mediates myelination in the peripheral nervous system through ERBB2/ERBB3 signaling. Plays a role as a regulator of muscle hypertrophy through the components of dystrophin-associated protein complex. Involved in positive regulation of mitochondrial depolarization. Plays a role in neurite outgrowth. May participate in the obstruction of fluid outflow in the trabecular meshwork. This Oryctolagus cuniculus (Rabbit) protein is Myocilin.